Here is a 121-residue protein sequence, read N- to C-terminus: Large ribosomal subunit protein bL17 (121 aa).

It belongs to the bacterial ribosomal protein bL17 family. Part of the 50S ribosomal subunit. Contacts protein L32.

The polypeptide is Large ribosomal subunit protein bL17 (Sulfurihydrogenibium sp. (strain YO3AOP1)).